Consider the following 1032-residue polypeptide: Connector enhancer of kinase suppressor of ras 2 (1032 aa).

The SAM domain maps to 11-76; sequence WSPSQVVDWM…LEAVDLLCAL (66 aa). At Ser12 the chain carries Phosphoserine. One can recognise a CRIC domain in the interval 84 to 178; it reads NLKTLSHKLN…TIVQQDCTVY (95 aa). Residues 215–297 form the PDZ domain; sequence VIQLANIKPS…GVILTLKKRP (83 aa). Positions 302–515 constitute a DUF1170 domain; the sequence is TSAPALLKNM…PAHYSLLPSL (214 aa). A compositionally biased stretch (low complexity) spans 324–340; sequence RSPTSSVATPSSTISTP. Positions 324 to 349 are disordered; sequence RSPTSSVATPSSTISTPTKRDSSALQ. Ser338 and Ser390 each carry phosphoserine. 2 disordered regions span residues 480-509 and 538-558; these read EEYM…PAHY and FQQS…ISGK. A compositionally biased stretch (basic residues) spans 545-558; the sequence is HKSKKKNKGAISGK. A PH domain is found at 570-669; it reads RGDCEGWLWK…WLNRINMLTA (100 aa). The interval 682–766 is disordered; the sequence is DYWSESDKEE…PIRKTASQRR (85 aa). A Phosphotyrosine modification is found at Tyr683. A compositionally biased stretch (acidic residues) spans 683–693; it reads YWSESDKEEAD. Residues Ser685 and Ser687 each carry the phosphoserine modification. Over residues 701–714 the composition is skewed to pro residues; that stretch reads DSPPPPYDTYPRPP. Positions 730–740 are enriched in low complexity; that stretch reads LSSTETSQSQS. Phosphoserine is present on residues Ser756 and Ser767. The interval 864 to 900 is disordered; the sequence is ACDPQDDIQPPEVEEEEEEEEEEAAGENVGEKNENRE. A coiled-coil region spans residues 874–917; the sequence is PEVEEEEEEEEEEAAGENVGEKNENREEKLGDSLQDLYRALEEA. Positions 875-888 are enriched in acidic residues; it reads EVEEEEEEEEEEAA. Ser906 is modified (phosphoserine).

This sequence belongs to the CNKSR family. As to quaternary structure, interacts with RAF1, RAB2L and RAL GTPase proteins. In terms of processing, phosphorylated on tyrosine.

It is found in the cytoplasm. The protein resides in the membrane. Functionally, may function as an adapter protein or regulator of Ras signaling pathways. The polypeptide is Connector enhancer of kinase suppressor of ras 2 (Cnksr2) (Mus musculus (Mouse)).